The following is a 290-amino-acid chain: Chitinase 10 (290 aa).

A signal peptide spans 1–28; the sequence is MAKPTPAPRATPFLLAAVLSIVVVAASG. 2 cysteine pairs are disulfide-bonded: Cys-70–Cys-132 and Cys-144–Cys-153. The Proton donor role is filled by Glu-114. N-linked (GlcNAc...) asparagine glycosylation is found at Asn-193 and Asn-234. The cysteines at positions 252 and 284 are disulfide-linked.

Belongs to the glycosyl hydrolase 19 family. Chitinase class I subfamily. Expressed at low levels in roots, leaves and meristems.

It catalyses the reaction Random endo-hydrolysis of N-acetyl-beta-D-glucosaminide (1-&gt;4)-beta-linkages in chitin and chitodextrins.. This chain is Chitinase 10 (Cht10), found in Oryza sativa subsp. japonica (Rice).